Reading from the N-terminus, the 1407-residue chain is DNA-directed RNA polymerase subunit beta' (1407 aa).

Residues cysteine 70, cysteine 72, cysteine 85, and cysteine 88 each contribute to the Zn(2+) site. Mg(2+) is bound by residues aspartate 460, aspartate 462, and aspartate 464. Residues cysteine 814, cysteine 888, cysteine 895, and cysteine 898 each coordinate Zn(2+).

It belongs to the RNA polymerase beta' chain family. The RNAP catalytic core consists of 2 alpha, 1 beta, 1 beta' and 1 omega subunit. When a sigma factor is associated with the core the holoenzyme is formed, which can initiate transcription. It depends on Mg(2+) as a cofactor. Zn(2+) serves as cofactor.

It catalyses the reaction RNA(n) + a ribonucleoside 5'-triphosphate = RNA(n+1) + diphosphate. Its function is as follows. DNA-dependent RNA polymerase catalyzes the transcription of DNA into RNA using the four ribonucleoside triphosphates as substrates. The sequence is that of DNA-directed RNA polymerase subunit beta' from Pectobacterium atrosepticum (strain SCRI 1043 / ATCC BAA-672) (Erwinia carotovora subsp. atroseptica).